Consider the following 206-residue polypeptide: Platelet glycoprotein Ib beta chain (206 aa).

The first 26 residues, 1–26 (MGSRPRGALSLLLLLLAPPSRPASGC), serve as a signal peptide directing secretion. Disulfide bonds link cysteine 26–cysteine 32 and cysteine 30–cysteine 39. One can recognise an LRRNT domain in the interval 27 to 55 (PAPCRCSETRVDCGRRGLTWASLPAAFPP). The Extracellular portion of the chain corresponds to 27–150 (PAPCRCSETR…CAPGLLCWGA (124 aa)). An LRR repeat occupies 60-83 (LVLTDNNLTALPPGLLDTLPALRR). Positions 89–143 (NPWRCDCRLLPLRAWLAGRPEREFYRDLRCVAPLALRGRLLPYVAEDELRAACAP) constitute an LRRCT domain. 2 cysteine pairs are disulfide-bonded: cysteine 93–cysteine 118 and cysteine 95–cysteine 141. The helical transmembrane segment at 151–171 (LVAQLALLVLGLLHALLLALL) threads the bilayer. Residues 172–206 (LSRLRRLRAQARARSTREFSLTAPLVAESAGGGAS) lie on the Cytoplasmic side of the membrane. Phosphoserine is present on serine 186. The residue at position 191 (serine 191) is a Phosphoserine; by PKA. Position 193 is a phosphothreonine (threonine 193). Serine 200 carries the post-translational modification Phosphoserine.

As to quaternary structure, two GP-Ib beta are disulfide-linked to one GP-Ib alpha. GP-IX is complexed with the GP-Ib heterodimer via a non covalent linkage. Interacts with TRAF4.

The protein localises to the membrane. Functionally, gp-Ib, a surface membrane protein of platelets, participates in the formation of platelet plugs by binding to von Willebrand factor, which is already bound to the subendothelium. This Rattus norvegicus (Rat) protein is Platelet glycoprotein Ib beta chain (Gp1bb).